Consider the following 645-residue polypeptide: UPF0313 protein CLK_3381 (645 aa).

One can recognise a Radical SAM core domain in the interval 295-566 (AIKEVKFSIT…RMQRALLQFS (272 aa)). The [4Fe-4S] cluster site is built by C309, C313, and C316. Residues 598–645 (NKPYKKSHKKNNVKNNNNHYNKNNNYNKNKDVSKKNKKNSLSKHKKRK) form a disordered region. Residues 600 to 609 (PYKKSHKKNN) are compositionally biased toward basic residues. Positions 610-624 (VKNNNNHYNKNNNYN) are enriched in low complexity. Positions 632 to 645 (KNKKNSLSKHKKRK) are enriched in basic residues.

It belongs to the UPF0313 family. [4Fe-4S] cluster is required as a cofactor.

This Clostridium botulinum (strain Loch Maree / Type A3) protein is UPF0313 protein CLK_3381.